Here is a 124-residue protein sequence, read N- to C-terminus: Fluoride-specific ion channel FluC (124 aa).

4 consecutive transmembrane segments (helical) span residues 4–24 (VIFI…LSGW), 32–52 (AFPY…GLIM), 68–88 (GLTI…YETF), and 96–116 (LLIA…FTWL). Na(+) contacts are provided by Gly75 and Thr78.

It belongs to the fluoride channel Fluc/FEX (TC 1.A.43) family.

The protein localises to the cell inner membrane. It carries out the reaction fluoride(in) = fluoride(out). With respect to regulation, na(+) is not transported, but it plays an essential structural role and its presence is essential for fluoride channel function. In terms of biological role, fluoride-specific ion channel. Important for reducing fluoride concentration in the cell, thus reducing its toxicity. The sequence is that of Fluoride-specific ion channel FluC from Geotalea daltonii (strain DSM 22248 / JCM 15807 / FRC-32) (Geobacter daltonii).